The following is a 227-amino-acid chain: Ribosomal RNA small subunit methyltransferase G (227 aa).

Residues Gly-69, Phe-74, 119 to 120, and Arg-134 each bind S-adenosyl-L-methionine; that span reads VE.

It belongs to the methyltransferase superfamily. RNA methyltransferase RsmG family.

The protein resides in the cytoplasm. Functionally, specifically methylates the N7 position of a guanine in 16S rRNA. This Mycoplasmopsis pulmonis (strain UAB CTIP) (Mycoplasma pulmonis) protein is Ribosomal RNA small subunit methyltransferase G.